The chain runs to 410 residues: Cytosolic isocitrate dehydrogenase [NADP] (410 aa).

NADP(+) contacts are provided by residues 77-79 and arginine 84; that span reads TIT. Residue threonine 79 participates in substrate binding. Substrate is bound by residues 96–102, arginine 111, and arginine 134; that span reads SPNGTIR. Residue lysine 260 participates in NADP(+) binding. 2 residues coordinate Mn(2+): aspartate 275 and aspartate 279. NADP(+) is bound by residues 310 to 315 and asparagine 328; that span reads GTVTRH.

Belongs to the isocitrate and isopropylmalate dehydrogenases family. Requires Mg(2+) as cofactor. Mn(2+) is required as a cofactor.

It is found in the cytoplasm. It localises to the cytosol. The enzyme catalyses D-threo-isocitrate + NADP(+) = 2-oxoglutarate + CO2 + NADPH. Its function is as follows. May supply 2-oxoglutarate for amino acid biosynthesis and ammonia assimilation via the glutamine synthetase/glutamate synthase (GS/GOGAT) pathway. May be involved in the production of NADPH to promote redox signaling or homeostasis in response to oxidative stress, or redox signaling linked to defense responses. This is Cytosolic isocitrate dehydrogenase [NADP] from Arabidopsis thaliana (Mouse-ear cress).